The sequence spans 78 residues: Apolipoprotein C-I (78 aa).

A signal peptide spans 1–26 (MRLILCLPVLVVVLLMVLEGPAPAQG).

It belongs to the apolipoprotein C1 family.

The protein localises to the secreted. Inhibitor of lipoprotein binding to the low density lipoprotein (LDL) receptor, LDL receptor-related protein, and very low density lipoprotein (VLDL) receptor. Associates with high density lipoproteins (HDL) and the triacylglycerol-rich lipoproteins in the plasma and makes up about 10% of the protein of the VLDL and 2% of that of HDL. Appears to interfere directly with fatty acid uptake and is also the major plasma inhibitor of cholesteryl ester transfer protein (CETP). Binds free fatty acids and reduces their intracellular esterification. Modulates the interaction of APOE with beta-migrating VLDL and inhibits binding of beta-VLDL to the LDL receptor-related protein. The sequence is that of Apolipoprotein C-I (APOC1) from Acinonyx jubatus (Cheetah).